The primary structure comprises 187 residues: Threonylcarbamoyl-AMP synthase (187 aa).

In terms of domain architecture, YrdC-like spans 3–187 (QVTPSQISGI…IQTGHIFRQG (185 aa)).

Belongs to the SUA5 family. TsaC subfamily.

Its subcellular location is the cytoplasm. The catalysed reaction is L-threonine + hydrogencarbonate + ATP = L-threonylcarbamoyladenylate + diphosphate + H2O. Its function is as follows. Required for the formation of a threonylcarbamoyl group on adenosine at position 37 (t(6)A37) in tRNAs that read codons beginning with adenine. Catalyzes the conversion of L-threonine, HCO(3)(-)/CO(2) and ATP to give threonylcarbamoyl-AMP (TC-AMP) as the acyladenylate intermediate, with the release of diphosphate. The sequence is that of Threonylcarbamoyl-AMP synthase from Shewanella amazonensis (strain ATCC BAA-1098 / SB2B).